A 439-amino-acid polypeptide reads, in one-letter code: Histidine--tRNA ligase (439 aa).

The protein belongs to the class-II aminoacyl-tRNA synthetase family. In terms of assembly, homodimer.

The protein localises to the cytoplasm. It carries out the reaction tRNA(His) + L-histidine + ATP = L-histidyl-tRNA(His) + AMP + diphosphate + H(+). The polypeptide is Histidine--tRNA ligase (hisS) (Leptospira interrogans serogroup Icterohaemorrhagiae serovar Lai (strain 56601)).